A 273-amino-acid chain; its full sequence is tRNA pseudouridine synthase A (273 aa).

The Nucleophile role is filled by Asp-52. Position 110 (Tyr-110) interacts with substrate.

Belongs to the tRNA pseudouridine synthase TruA family. As to quaternary structure, homodimer.

It catalyses the reaction uridine(38/39/40) in tRNA = pseudouridine(38/39/40) in tRNA. In terms of biological role, formation of pseudouridine at positions 38, 39 and 40 in the anticodon stem and loop of transfer RNAs. In Cupriavidus pinatubonensis (strain JMP 134 / LMG 1197) (Cupriavidus necator (strain JMP 134)), this protein is tRNA pseudouridine synthase A.